Here is a 243-residue protein sequence, read N- to C-terminus: 4-phosphopantoate--beta-alanine ligase (243 aa).

ATP contacts are provided by residues R15, R37, 176 to 178 (DLN), and 182 to 183 (RT).

Belongs to the archaeal phosphopantothenate synthetase family. Homodimer.

It carries out the reaction (R)-4-phosphopantoate + beta-alanine + ATP = (R)-4'-phosphopantothenate + AMP + diphosphate + H(+). Its pathway is cofactor biosynthesis; coenzyme A biosynthesis. Functionally, catalyzes the condensation of (R)-4-phosphopantoate and beta-alanine to 4'-phosphopantothenate in the CoA biosynthesis pathway. The polypeptide is 4-phosphopantoate--beta-alanine ligase (Methanospirillum hungatei JF-1 (strain ATCC 27890 / DSM 864 / NBRC 100397 / JF-1)).